Here is a 525-residue protein sequence, read N- to C-terminus: Glutamate--cysteine ligase (525 aa).

The protein belongs to the glutamate--cysteine ligase type 1 family. Type 1 subfamily.

It carries out the reaction L-cysteine + L-glutamate + ATP = gamma-L-glutamyl-L-cysteine + ADP + phosphate + H(+). Its pathway is sulfur metabolism; glutathione biosynthesis; glutathione from L-cysteine and L-glutamate: step 1/2. The polypeptide is Glutamate--cysteine ligase (Pseudomonas putida (strain ATCC 47054 / DSM 6125 / CFBP 8728 / NCIMB 11950 / KT2440)).